Here is a 265-residue protein sequence, read N- to C-terminus: 4-hydroxy-tetrahydrodipicolinate reductase (265 aa).

9 to 14 (GARGKM) provides a ligand contact to NAD(+). Residue Lys-37 participates in NADP(+) binding. Residues 99–101 (GTT) and 125–128 (APNF) each bind NAD(+). His-155 serves as the catalytic Proton donor/acceptor. His-156 serves as a coordination point for (S)-2,3,4,5-tetrahydrodipicolinate. The Proton donor role is filled by Lys-159. A (S)-2,3,4,5-tetrahydrodipicolinate-binding site is contributed by 165–166 (GT).

Belongs to the DapB family.

It is found in the cytoplasm. It carries out the reaction (S)-2,3,4,5-tetrahydrodipicolinate + NAD(+) + H2O = (2S,4S)-4-hydroxy-2,3,4,5-tetrahydrodipicolinate + NADH + H(+). The enzyme catalyses (S)-2,3,4,5-tetrahydrodipicolinate + NADP(+) + H2O = (2S,4S)-4-hydroxy-2,3,4,5-tetrahydrodipicolinate + NADPH + H(+). It functions in the pathway amino-acid biosynthesis; L-lysine biosynthesis via DAP pathway; (S)-tetrahydrodipicolinate from L-aspartate: step 4/4. Functionally, catalyzes the conversion of 4-hydroxy-tetrahydrodipicolinate (HTPA) to tetrahydrodipicolinate. The chain is 4-hydroxy-tetrahydrodipicolinate reductase from Lysinibacillus sphaericus (strain C3-41).